Here is a 295-residue protein sequence, read N- to C-terminus: Non-selective voltage-gated ion channel VDAC2 (295 aa).

2 residues coordinate ATP: Lys-24 and Lys-32. N6-acetyllysine; alternate is present on Lys-32. Lys-32 is subject to N6-succinyllysine; alternate. A Glycyl lysine isopeptide (Lys-Gly) (interchain with G-Cter in ubiquitin); alternate cross-link involves residue Lys-32. 2 consecutive transmembrane segments (beta stranded) span residues 38–45 (LVKLDVKT) and 51–60 (VEFSTSGSSN). Lys-65 is covalently cross-linked (Glycyl lysine isopeptide (Lys-Gly) (interchain with G-Cter in ubiquitin)). A beta stranded transmembrane segment spans residues 66–76 (VSGTLETKYKW). The residue at position 79 (Tyr-79) is a Phosphotyrosine. Beta stranded transmembrane passes span 81-88 (LTFTEKWN), 92-100 (TLGTEIAIE), and 107-116 (LKLTFDTTFS). Thr-119 carries the phosphothreonine modification. Lys-121 bears the N6-acetyllysine; alternate mark. Lys-121 participates in a covalent cross-link: Glycyl lysine isopeptide (Lys-Gly) (interchain with G-Cter in ubiquitin); alternate. A Glycyl lysine isopeptide (Lys-Gly) (interchain with G-Cter in ubiquitin) cross-link involves residue Lys-122. The next 4 beta stranded transmembrane spans lie at 122 to 131 (KSGKIKSAYK), 135 to 144 (INLGCDVDFD), 148 to 157 (PAIHGSAVFG), and 161 to 170 (WLAGYQMTFD). A Glycyl lysine isopeptide (Lys-Gly) (interchain with G-Cter in ubiquitin) cross-link involves residue Lys-173. Transmembrane regions (beta stranded) follow at residues 177–187 (TRSNFAVGYRT), 190–197 (FQLHTNVN), 201–210 (EFGGSIYQKV), 214–222 (FDTSVNLAW), 229–238 (TRFGIAAKYQ), and 243–250 (ASISAKVN). Ser-252 carries the phosphoserine modification. NAD(+) is bound by residues 254–256 (LIG) and 272–276 (SALVD). Transmembrane regions (beta stranded) follow at residues 254 to 263 (LIGVGYTQTL) and 267 to 275 (VKLTLSALV). Lys-278 is modified (N6-acetyllysine; alternate). Lys-278 is covalently cross-linked (Glycyl lysine isopeptide (Lys-Gly) (interchain with G-Cter in ubiquitin); alternate). Residues 285–295 (HKLGLALELEA) traverse the membrane as a beta stranded segment.

It belongs to the eukaryotic mitochondrial porin family. As to quaternary structure, monomer, homodimer and higher order oligomers; formation of higher order structures is necessary for scramblase activity. Interacts with ARMC12 in a TBC1D21-dependent manner. Interacts with KLC3. Interacts with SPATA33. Interacts with PPP3CC in a SPATA33-dependent manner. Post-translationally, ubiquitinated by PRKN during mitophagy, leading to its degradation and enhancement of mitophagy. Deubiquitinated by USP30. As to expression, highest levels of expression detected in testis, less but still abundant expression in heart, kidney, brain, and skeletal muscle. Expressed in the sperm midpiece (at protein level).

It localises to the mitochondrion outer membrane. The protein localises to the membrane. It catalyses the reaction chloride(in) = chloride(out). It carries out the reaction K(+)(in) = K(+)(out). The catalysed reaction is a 1,2-diacyl-sn-glycero-3-phospho-L-serine(in) = a 1,2-diacyl-sn-glycero-3-phospho-L-serine(out). The enzyme catalyses a 1,2-diacyl-sn-glycero-3-phosphocholine(in) = a 1,2-diacyl-sn-glycero-3-phosphocholine(out). It catalyses the reaction a 1,2-diacyl-sn-glycero-3-phospho-(1D-myo-inositol)(in) = a 1,2-diacyl-sn-glycero-3-phospho-(1D-myo-inositol)(out). Functionally, non-selective voltage-gated ion channel that mediates the transport of anions and cations through the mitochondrion outer membrane and plasma membrane. The channel adopts an open conformation at zero mV and a closed conformation at both positive and negative potentials. There are two populations of channels; the main that functions in a lower open-state conductance with lower ion selectivity, that switch, in a voltage-dependent manner, from the open to a low-conducting 'closed' state and the other that has a normal ion selectivity in the typical high conductance, 'open' state. Binds various lipids, including the sphingolipid ceramide, the phospholipid phosphatidylcholine, and the sterols cholesterol and oxysterol. Binding of ceramide promotes the mitochondrial outer membrane permeabilization (MOMP) apoptotic pathway. Its function is as follows. Catalyzes the scrambling of phospholipids across the outer mitochondrial membrane; the mechanism is unrelated to channel activity and is capable of translocating both anionic and zwitterionic phospholipids. The sequence is that of Non-selective voltage-gated ion channel VDAC2 from Mus musculus (Mouse).